The chain runs to 603 residues: Serine/threonine-protein kinase HAL4/SAT4 (603 aa).

Polar residues-rich tracts occupy residues 1–15, 30–60, and 68–85; these read MTGM…PQQT, RSGS…SASK, and TPTT…NTAG. Disordered regions lie at residues 1 to 86, 150 to 171, and 267 to 301; these read MTGM…TAGV, LSPK…PTPT, and DKYP…THNI. Low complexity predominate over residues 159–171; that stretch reads NSNTAITPAPTPT. Basic and acidic residues predominate over residues 282-296; it reads PERDIYRSDQKDSKN. Positions 316 to 590 constitute a Protein kinase domain; sequence GRCQEVLGKG…GKQILNSEWG (275 aa). ATP is bound by residues 322–330 and Lys-353; that span reads LGKGAFGVV. Residue Asp-449 is the Proton acceptor of the active site.

The protein belongs to the protein kinase superfamily. Ser/Thr protein kinase family.

The enzyme catalyses L-seryl-[protein] + ATP = O-phospho-L-seryl-[protein] + ADP + H(+). It carries out the reaction L-threonyl-[protein] + ATP = O-phospho-L-threonyl-[protein] + ADP + H(+). Functionally, promotes K(+) uptake, by the potassium transporter TRK1-TRK2, which leads to the subsequent cellular resistance to toxic cations such as Na(+), Li(+) and Ca(2+). The sequence is that of Serine/threonine-protein kinase HAL4/SAT4 (SAT4) from Saccharomyces cerevisiae (strain ATCC 204508 / S288c) (Baker's yeast).